The sequence spans 933 residues: uncharacterized protein (933 aa).

Residues 244 to 255 are compositionally biased toward basic and acidic residues; the sequence is KKDIGAKPKPVD. 2 disordered regions span residues 244-277 and 343-364; these read KKDIGAKPKPVDDVSPQPVRARTPPENTVVELPD and SAPHQPSSQHAQMGRHSQEWKG. Residues 343 to 353 show a composition bias toward polar residues; that stretch reads SAPHQPSSQHA. The chain crosses the membrane as a helical span at residues 771-791; it reads VIHGMVLMFAGGKLLFGGCVL. Residues 890–907 are compositionally biased toward basic and acidic residues; sequence DKIEKEPPPSPEKVKPPE. The tract at residues 890 to 933 is disordered; sequence DKIEKEPPPSPEKVKPPEIELQPFTKMRRSSKKTAGFKKLNSKK. Positions 915-933 are enriched in basic residues; it reads KMRRSSKKTAGFKKLNSKK.

It localises to the membrane. This is an uncharacterized protein from Mus musculus (Mouse).